The sequence spans 422 residues: 3-isopropylmalate dehydratase large subunit (422 aa).

The [4Fe-4S] cluster site is built by C294, C354, and C357.

Belongs to the aconitase/IPM isomerase family. LeuC type 2 subfamily. In terms of assembly, heterodimer of LeuC and LeuD. It depends on [4Fe-4S] cluster as a cofactor.

The enzyme catalyses (2R,3S)-3-isopropylmalate = (2S)-2-isopropylmalate. It participates in amino-acid biosynthesis; L-leucine biosynthesis; L-leucine from 3-methyl-2-oxobutanoate: step 2/4. In terms of biological role, catalyzes the isomerization between 2-isopropylmalate and 3-isopropylmalate, via the formation of 2-isopropylmaleate. This is 3-isopropylmalate dehydratase large subunit from Mycolicibacterium smegmatis (strain ATCC 700084 / mc(2)155) (Mycobacterium smegmatis).